A 288-amino-acid chain; its full sequence is 4-diphosphocytidyl-2-C-methyl-D-erythritol kinase (288 aa).

Lysine 8 is a catalytic residue. An ATP-binding site is contributed by 92–102 (PVAAGMAGGST). Aspartate 134 is a catalytic residue.

The protein belongs to the GHMP kinase family. IspE subfamily.

The catalysed reaction is 4-CDP-2-C-methyl-D-erythritol + ATP = 4-CDP-2-C-methyl-D-erythritol 2-phosphate + ADP + H(+). The protein operates within isoprenoid biosynthesis; isopentenyl diphosphate biosynthesis via DXP pathway; isopentenyl diphosphate from 1-deoxy-D-xylulose 5-phosphate: step 3/6. In terms of biological role, catalyzes the phosphorylation of the position 2 hydroxy group of 4-diphosphocytidyl-2C-methyl-D-erythritol. The protein is 4-diphosphocytidyl-2-C-methyl-D-erythritol kinase of Clostridium perfringens (strain 13 / Type A).